The following is an 886-amino-acid chain: Semaphorin-6B (886 aa).

An N-terminal signal peptide occupies residues 1-26 (MWTPRVPPPRPALSFFLLLLLGVTYG). At 27 to 605 (LFPEEPPPLS…VSVNLLVTSS (579 aa)) the chain is on the extracellular side. Positions 32-525 (PPPLSVAPRD…FPRCVVRVPV (494 aa)) constitute a Sema domain. Asn-75 carries an N-linked (GlcNAc...) asparagine glycan. 2 cysteine pairs are disulfide-bonded: Cys-117–Cys-127 and Cys-145–Cys-154. N-linked (GlcNAc...) asparagine glycans are attached at residues Asn-156 and Asn-292. Intrachain disulfides connect Cys-268/Cys-379 and Cys-293/Cys-338. 3 N-linked (GlcNAc...) asparagine glycosylation sites follow: Asn-387, Asn-442, and Asn-463. 4 disulfide bridges follow: Cys-487–Cys-519, Cys-528–Cys-546, Cys-534–Cys-580, and Cys-538–Cys-554. Residues 606 to 626 (VAAFVVGAVVSGFSVGWFVGL) form a helical membrane-spanning segment. Residues 627–886 (RERRELARRK…TGERTAPPVP (260 aa)) lie on the Cytoplasmic side of the membrane. Disordered stretches follow at residues 655 to 677 (RLGERRGTGPGGRGGAGGGPGGP), 697 to 731 (HGGPHDLDTGLLPTPEQTPLPQKRLPTPHPHAHAL), and 761 to 886 (EQPQ…PPVP). Residues 662–674 (TGPGGRGGAGGGP) are compositionally biased toward gly residues. Residue Arg-667 is modified to Omega-N-methylarginine. Residues 707–718 (LLPTPEQTPLPQ) are compositionally biased toward low complexity.

Belongs to the semaphorin family. As to quaternary structure, homodimer. Binds specifically the SH3 domain of the protooncogene C-SRC. In terms of tissue distribution, in adulthood, it is expressed ubiquitously.

It is found in the cell membrane. In terms of biological role, functions as a cell surface repellent for mossy fibers of developing neurons in the hippocampus where it plays a role in axon guidance. May function through the PLXNA4 receptor expressed by mossy cell axons. The chain is Semaphorin-6B (Sema6b) from Mus musculus (Mouse).